Here is a 120-residue protein sequence, read N- to C-terminus: Large ribosomal subunit protein uL18 (120 aa).

Belongs to the universal ribosomal protein uL18 family. Part of the 50S ribosomal subunit; part of the 5S rRNA/L5/L18/L25 subcomplex. Contacts the 5S and 23S rRNAs.

This is one of the proteins that bind and probably mediate the attachment of the 5S RNA into the large ribosomal subunit, where it forms part of the central protuberance. This Macrococcus caseolyticus (strain JCSC5402) (Macrococcoides caseolyticum) protein is Large ribosomal subunit protein uL18.